The sequence spans 407 residues: Phosphopentomutase (407 aa).

Mn(2+) contacts are provided by Asp-10, Asp-306, His-311, Asp-347, His-348, and His-359.

The protein belongs to the phosphopentomutase family. Mn(2+) serves as cofactor.

Its subcellular location is the cytoplasm. It catalyses the reaction 2-deoxy-alpha-D-ribose 1-phosphate = 2-deoxy-D-ribose 5-phosphate. The enzyme catalyses alpha-D-ribose 1-phosphate = D-ribose 5-phosphate. The protein operates within carbohydrate degradation; 2-deoxy-D-ribose 1-phosphate degradation; D-glyceraldehyde 3-phosphate and acetaldehyde from 2-deoxy-alpha-D-ribose 1-phosphate: step 1/2. Its function is as follows. Isomerase that catalyzes the conversion of deoxy-ribose 1-phosphate (dRib-1-P) and ribose 1-phosphate (Rib-1-P) to deoxy-ribose 5-phosphate (dRib-5-P) and ribose 5-phosphate (Rib-5-P), respectively. The polypeptide is Phosphopentomutase (Sodalis glossinidius (strain morsitans)).